A 352-amino-acid polypeptide reads, in one-letter code: Nicotinate-nucleotide--dimethylbenzimidazole phosphoribosyltransferase (352 aa).

Residue Glu-318 is the Proton acceptor of the active site.

It belongs to the CobT family.

The catalysed reaction is 5,6-dimethylbenzimidazole + nicotinate beta-D-ribonucleotide = alpha-ribazole 5'-phosphate + nicotinate + H(+). The protein operates within nucleoside biosynthesis; alpha-ribazole biosynthesis; alpha-ribazole from 5,6-dimethylbenzimidazole: step 1/2. In terms of biological role, catalyzes the synthesis of alpha-ribazole-5'-phosphate from nicotinate mononucleotide (NAMN) and 5,6-dimethylbenzimidazole (DMB). The polypeptide is Nicotinate-nucleotide--dimethylbenzimidazole phosphoribosyltransferase (Dehalococcoides mccartyi (strain ATCC BAA-2100 / JCM 16839 / KCTC 5957 / BAV1)).